The following is a 102-amino-acid chain: uncharacterized protein (102 aa).

This is an uncharacterized protein from Methanothermococcus thermolithotrophicus (Methanococcus thermolithotrophicus).